The chain runs to 248 residues: NADH dehydrogenase [ubiquinone] flavoprotein 2, mitochondrial (248 aa).

Residues Met-1 to Asn-31 constitute a mitochondrion transit peptide. [2Fe-2S] cluster contacts are provided by Cys-134, Cys-139, Cys-175, and Cys-179. Tyr-192 carries the phosphotyrosine; by SRC modification. Residues Gly-229 to Leu-248 are disordered.

The protein belongs to the complex I 24 kDa subunit family. As to quaternary structure, core subunit of respiratory chain NADH dehydrogenase (Complex I) which is composed of 45 different subunits. This is a component of the flavoprotein-sulfur (FP) fragment of the enzyme. [2Fe-2S] cluster serves as cofactor.

The protein localises to the mitochondrion inner membrane. It catalyses the reaction a ubiquinone + NADH + 5 H(+)(in) = a ubiquinol + NAD(+) + 4 H(+)(out). Core subunit of the mitochondrial membrane respiratory chain NADH dehydrogenase (Complex I) which catalyzes electron transfer from NADH through the respiratory chain, using ubiquinone as an electron acceptor. Parts of the peripheral arm of the enzyme, where the electrons from NADH are accepted by flavin mononucleotide (FMN) and then passed along a chain of iron-sulfur clusters by electron tunnelling to the final acceptor ubiquinone. Contains one iron-sulfur cluster. The sequence is that of NADH dehydrogenase [ubiquinone] flavoprotein 2, mitochondrial from Rattus norvegicus (Rat).